Here is a 119-residue protein sequence, read N- to C-terminus: Ribonuclease P protein component (119 aa).

It belongs to the RnpA family. In terms of assembly, consists of a catalytic RNA component (M1 or rnpB) and a protein subunit.

The catalysed reaction is Endonucleolytic cleavage of RNA, removing 5'-extranucleotides from tRNA precursor.. Its function is as follows. RNaseP catalyzes the removal of the 5'-leader sequence from pre-tRNA to produce the mature 5'-terminus. It can also cleave other RNA substrates such as 4.5S RNA. The protein component plays an auxiliary but essential role in vivo by binding to the 5'-leader sequence and broadening the substrate specificity of the ribozyme. The polypeptide is Ribonuclease P protein component (Haemophilus influenzae (strain 86-028NP)).